A 70-amino-acid polypeptide reads, in one-letter code: ATP synthase subunit c (70 aa).

Transmembrane regions (helical) follow at residues Ile-4 to Ile-24 and Gly-49 to Phe-69.

It belongs to the ATPase C chain family. As to quaternary structure, F-type ATPases have 2 components, F(1) - the catalytic core - and F(0) - the membrane proton channel. F(1) has five subunits: alpha(3), beta(3), gamma(1), delta(1), epsilon(1). F(0) has three main subunits: a(1), b(2) and c(10-14). The alpha and beta chains form an alternating ring which encloses part of the gamma chain. F(1) is attached to F(0) by a central stalk formed by the gamma and epsilon chains, while a peripheral stalk is formed by the delta and b chains. The F(1)F(0) complex interacts with SpoIIIJ and YqjG; YqgA is found in the same complex.

The protein resides in the cell membrane. F(1)F(0) ATP synthase produces ATP from ADP in the presence of a proton or sodium gradient. F-type ATPases consist of two structural domains, F(1) containing the extramembraneous catalytic core and F(0) containing the membrane proton channel, linked together by a central stalk and a peripheral stalk. During catalysis, ATP synthesis in the catalytic domain of F(1) is coupled via a rotary mechanism of the central stalk subunits to proton translocation. Functionally, key component of the F(0) channel; it plays a direct role in translocation across the membrane. A homomeric c-ring of between 10-14 subunits forms the central stalk rotor element with the F(1) delta and epsilon subunits. The polypeptide is ATP synthase subunit c (Bacillus subtilis (strain 168)).